We begin with the raw amino-acid sequence, 406 residues long: Phosphatidylinositol 5-phosphate 4-kinase type-2 alpha (406 aa).

Ala2 bears the N-acetylalanine mark. Thr3 carries the post-translational modification Phosphothreonine. Ser14 is subject to Phosphoserine. The region spanning Ala33 to Leu405 is the PIPK domain. A required for interaction with PIP5K1A region spans residues Val59–Asp65. 2 positions are modified to N6-acetyllysine: Lys89 and Lys145. Residues Gln288–Pro329 are disordered. Acidic residues predominate over residues Glu289–Ser304.

Homodimer. Interacts with PIP4K2B; the interaction may regulate localization to the nucleus. Probably interacts with PIP5K1A; the interaction inhibits PIP5K1A kinase activity. In terms of processing, phosphorylated in tyrosines. Phosphorylation is induced by light and increases kinase activity. In terms of tissue distribution, expressed ubiquitously, with high levels in the brain. Present in most tissues, except notably skeletal muscle and small intestine.

It localises to the cell membrane. The protein localises to the nucleus. Its subcellular location is the lysosome. It is found in the cytoplasm. The protein resides in the photoreceptor inner segment. It localises to the cell projection. The protein localises to the cilium. Its subcellular location is the photoreceptor outer segment. It catalyses the reaction a 1,2-diacyl-sn-glycero-3-phospho-(1D-myo-inositol-5-phosphate) + ATP = a 1,2-diacyl-sn-glycero-3-phospho-(1D-myo-inositol-4,5-bisphosphate) + ADP + H(+). The catalysed reaction is 1,2-dihexadecanoyl-sn-glycero-3-phospho-(1D-myo-inositol-5-phosphate) + ATP = 1,2-dihexadecanoyl-sn-glycero-3-phospho-(1D-myo-inositol-4,5-bisphosphate) + ADP + H(+). It carries out the reaction 1,2-dihexadecanoyl-sn-glycero-3-phospho-(1D-myo-inositol-5-phosphate) + GTP = 1,2-dihexadecanoyl-sn-glycero-3-phospho-(1D-myo-inositol-4,5-bisphosphate) + GDP + H(+). With respect to regulation, in rod outer segments, activated by light. Inhibited by I-OMe tyrphostin AG-538 (I-OMe-AG-538), acting as an ATP-competitive inhibitor. In terms of biological role, catalyzes the phosphorylation of phosphatidylinositol 5-phosphate (PtdIns5P) on the fourth hydroxyl of the myo-inositol ring, to form phosphatidylinositol 4,5-bisphosphate (PtdIns(4,5)P2). Has both ATP- and GTP-dependent kinase activities. May exert its function by regulating the levels of PtdIns5P, which functions in the cytosol by increasing AKT activity and in the nucleus signals through ING2. May regulate the pool of cytosolic PtdIns5P in response to the activation of tyrosine phosphorylation. Required for lysosome-peroxisome membrane contacts and intracellular cholesterol transport through modulating peroxisomal PtdIns(4,5)P2 level. In collaboration with PIP4K2B, has a role in mediating autophagy in times of nutrient stress. Required for autophagosome-lysosome fusion and the regulation of cellular lipid metabolism. May be involved in thrombopoiesis, and the terminal maturation of megakaryocytes and regulation of their size. Negatively regulates insulin signaling through a catalytic-independent mechanism. PIP4Ks interact with PIP5Ks and suppress PIP5K-mediated PtdIns(4,5)P2 synthesis and insulin-dependent conversion to PtdIns(3,4,5)P3. The chain is Phosphatidylinositol 5-phosphate 4-kinase type-2 alpha from Homo sapiens (Human).